Consider the following 117-residue polypeptide: UPF0342 protein BcerKBAB4_0767 (117 aa).

It belongs to the UPF0342 family.

In Bacillus mycoides (strain KBAB4) (Bacillus weihenstephanensis), this protein is UPF0342 protein BcerKBAB4_0767.